Here is a 338-residue protein sequence, read N- to C-terminus: Ferredoxin--NADP reductase (338 aa).

FAD contacts are provided by aspartate 38, glutamine 46, tyrosine 51, valine 91, phenylalanine 125, aspartate 291, and threonine 331.

It belongs to the ferredoxin--NADP reductase type 2 family. Homodimer. Requires FAD as cofactor.

The catalysed reaction is 2 reduced [2Fe-2S]-[ferredoxin] + NADP(+) + H(+) = 2 oxidized [2Fe-2S]-[ferredoxin] + NADPH. In Orientia tsutsugamushi (strain Ikeda) (Rickettsia tsutsugamushi), this protein is Ferredoxin--NADP reductase.